Consider the following 121-residue polypeptide: Nitrogen fixation nifHD region glnB-like protein 2 (121 aa).

The protein belongs to the P(II) protein family.

Could be involved in the regulation of nitrogen fixation. The polypeptide is Nitrogen fixation nifHD region glnB-like protein 2 (glnBII) (Methanococcus maripaludis (Methanococcus deltae)).